Consider the following 178-residue polypeptide: ATP synthase subunit d, mitochondrial (178 aa).

The disordered stretch occupies residues 149–178 (NKPTFWPHTPEEQVGYKSKEQLEAEAQGHH). Positions 165-178 (KSKEQLEAEAQGHH) are enriched in basic and acidic residues.

This sequence belongs to the ATPase d subunit family. As to quaternary structure, F-type ATPases have 2 components, CF(1) - the catalytic core - and CF(0) - the membrane proton channel. CF(0) seems to have nine subunits: a, b, c, d, e, f, g, F6 and 8 (or A6L).

Its subcellular location is the mitochondrion. The protein localises to the mitochondrion inner membrane. Mitochondrial membrane ATP synthase (F(1)F(0) ATP synthase or Complex V) produces ATP from ADP in the presence of a proton gradient across the membrane which is generated by electron transport complexes of the respiratory chain. F-type ATPases consist of two structural domains, F(1) - containing the extramembraneous catalytic core, and F(0) - containing the membrane proton channel, linked together by a central stalk and a peripheral stalk. During catalysis, ATP synthesis in the catalytic domain of F(1) is coupled via a rotary mechanism of the central stalk subunits to proton translocation. Part of the complex F(0) domain and the peripheric stalk, which acts as a stator to hold the catalytic alpha(3)beta(3) subcomplex and subunit a/ATP6 static relative to the rotary elements. The sequence is that of ATP synthase subunit d, mitochondrial from Drosophila melanogaster (Fruit fly).